Reading from the N-terminus, the 1076-residue chain is Carbamoyl phosphate synthase large chain (1076 aa).

Positions Met-1–Glu-403 are carboxyphosphate synthetic domain. Arg-129, Arg-169, Gly-175, Gly-176, Glu-208, Leu-210, Glu-215, Gly-241, Ile-242, His-243, Gln-285, and Glu-299 together coordinate ATP. One can recognise an ATP-grasp 1 domain in the interval Asp-133–Val-328. The Mg(2+) site is built by Gln-285, Glu-299, and Asn-301. Gln-285, Glu-299, and Asn-301 together coordinate Mn(2+). Residues Val-404–Ala-553 are oligomerization domain. The segment at Asn-554 to Gly-935 is carbamoyl phosphate synthetic domain. One can recognise an ATP-grasp 2 domain in the interval Gln-678–Val-869. ATP-binding residues include Arg-714, Arg-753, Leu-755, Glu-760, Gly-785, Val-786, His-787, Ser-788, Gln-828, and Glu-840. 3 residues coordinate Mg(2+): Gln-828, Glu-840, and Asn-842. Residues Gln-828, Glu-840, and Asn-842 each contribute to the Mn(2+) site. An MGS-like domain is found at Ser-936–Ala-1076. Residues Ser-936–Ala-1076 form an allosteric domain region.

It belongs to the CarB family. In terms of assembly, composed of two chains; the small (or glutamine) chain promotes the hydrolysis of glutamine to ammonia, which is used by the large (or ammonia) chain to synthesize carbamoyl phosphate. Tetramer of heterodimers (alpha,beta)4. Requires Mg(2+) as cofactor. Mn(2+) is required as a cofactor.

It carries out the reaction hydrogencarbonate + L-glutamine + 2 ATP + H2O = carbamoyl phosphate + L-glutamate + 2 ADP + phosphate + 2 H(+). It catalyses the reaction hydrogencarbonate + NH4(+) + 2 ATP = carbamoyl phosphate + 2 ADP + phosphate + 2 H(+). It functions in the pathway amino-acid biosynthesis; L-arginine biosynthesis; carbamoyl phosphate from bicarbonate: step 1/1. Its pathway is pyrimidine metabolism; UMP biosynthesis via de novo pathway; (S)-dihydroorotate from bicarbonate: step 1/3. Its function is as follows. Large subunit of the glutamine-dependent carbamoyl phosphate synthetase (CPSase). CPSase catalyzes the formation of carbamoyl phosphate from the ammonia moiety of glutamine, carbonate, and phosphate donated by ATP, constituting the first step of 2 biosynthetic pathways, one leading to arginine and/or urea and the other to pyrimidine nucleotides. The large subunit (synthetase) binds the substrates ammonia (free or transferred from glutamine from the small subunit), hydrogencarbonate and ATP and carries out an ATP-coupled ligase reaction, activating hydrogencarbonate by forming carboxy phosphate which reacts with ammonia to form carbamoyl phosphate. This chain is Carbamoyl phosphate synthase large chain, found in Vibrio cholerae serotype O1 (strain ATCC 39315 / El Tor Inaba N16961).